The following is an 834-amino-acid chain: Mannosyl-oligosaccharide glucosidase (834 aa).

Positions 1–10 (MARGERRRRA) are enriched in basic residues. A disordered region spans residues 1–37 (MARGERRRRAAAAEGARPLERARAAGRRDGRAGGARG). At 1–43 (MARGERRRRAAAAEGARPLERARAAGRRDGRAGGARGSASGAA) the chain is on the cytoplasmic side. The Endoplasmic reticulum targeting motif lies at 3 to 9 (RGERRRR). Basic and acidic residues predominate over residues 17–31 (RPLERARAAGRRDGR). A helical; Signal-anchor for type II membrane protein transmembrane segment spans residues 44-64 (LAVVVLALAFGLSGRWVLAWL). Residues 65-834 (RVRRALTLHP…LVLLIMAEEY (770 aa)) lie on the Lumenal side of the membrane. Residues 74–136 (PAPSALPPDS…GTPPKLRHTC (63 aa)) are required for endoplasmic reticulum targeting. The active-site Proton donor is aspartate 580. N-linked (GlcNAc...) asparagine glycosylation is present at asparagine 654. The Proton acceptor role is filled by glutamate 804.

The protein belongs to the glycosyl hydrolase 63 family.

The protein resides in the endoplasmic reticulum membrane. The catalysed reaction is N(4)-(alpha-D-Glc-(1-&gt;2)-alpha-D-Glc-(1-&gt;3)-alpha-D-Glc-(1-&gt;3)-alpha-D-Man-(1-&gt;2)-alpha-D-Man-(1-&gt;2)-alpha-D-Man-(1-&gt;3)-[alpha-D-Man-(1-&gt;2)-alpha-D-Man-(1-&gt;3)-[alpha-D-Man-(1-&gt;2)-alpha-D-Man-(1-&gt;6)]-alpha-D-Man-(1-&gt;6)]-beta-D-Man-(1-&gt;4)-beta-D-GlcNAc-(1-&gt;4)-beta-D-GlcNAc)-L-asparaginyl-[protein] + H2O = N(4)-(alpha-D-Glc-(1-&gt;3)-alpha-D-Glc-(1-&gt;3)-alpha-D-Man-(1-&gt;2)-alpha-D-Man-(1-&gt;2)-alpha-D-Man-(1-&gt;3)-[alpha-D-Man-(1-&gt;2)-alpha-D-Man-(1-&gt;3)-[alpha-D-Man-(1-&gt;2)-alpha-D-Man-(1-&gt;6)]-alpha-D-Man-(1-&gt;6)]-beta-D-Man-(1-&gt;4)-beta-D-GlcNAc-(1-&gt;4)-beta-D-GlcNAc)-L-asparaginyl-[protein] + beta-D-glucose. The protein operates within glycan metabolism; N-glycan degradation. With respect to regulation, inhibited by the deoxynojirimycin derivative N-9'-Methoxynonyl-1-Deoxynojirimycin. Its function is as follows. In the context of N-glycan degradation, cleaves the distal alpha 1,2-linked glucose residue from the Glc(3)Man(9)GlcNAc(2) oligosaccharide precursor in a highly specific manner. Functionally, (Microbial infection) Required for successful influenza or dengue virus infection; inhibition of its activity by a deoxynojirimycin derivative prevents death in mice infected with lethal doses of influenza or dengue viruses, even when administrated after infection. In Mus musculus (Mouse), this protein is Mannosyl-oligosaccharide glucosidase.